The sequence spans 526 residues: Probable carboxypeptidase 2 (526 aa).

Residues 1–21 (MVAYRLLALISLGLGSHCASA) form the signal peptide. A glycan (N-linked (GlcNAc...) asparagine) is linked at N46. Residues 53 to 76 (PAFTSPGTVPRGFSDGTSGPTRDE) form a disordered region. In terms of domain architecture, Peptidase M14 spans 71–351 (GPTRDETMEG…VMAKSILQTA (281 aa)). N116 carries an N-linked (GlcNAc...) asparagine glycan. Residues H136, E139, and H224 each coordinate Zn(2+). The active-site Proton donor/acceptor is E322. Residues N393 and N459 are each glycosylated (N-linked (GlcNAc...) asparagine).

Belongs to the peptidase M14 family. It depends on Zn(2+) as a cofactor.

It localises to the secreted. Functionally, extracellular metalloprotease that contributes to pathogenicity. This chain is Probable carboxypeptidase 2 (MCPB), found in Arthroderma benhamiae (strain ATCC MYA-4681 / CBS 112371) (Trichophyton mentagrophytes).